The chain runs to 142 residues: Pro-vaccinia growth factor (142 aa).

An N-terminal signal peptide occupies residues 1 to 18 (MSMKYLMLLFAAMIIRSF). Residues 19–100 (ADSGNAIETT…SENPNTTTSY (82 aa)) lie on the Extracellular side of the membrane. A glycan (N-linked (GlcNAc...) asparagine; by host) is linked at N34. The 41-residue stretch at 41-81 (AIRLCGPEGDGYCLHGDCIHARDIDGMYCRCSHGYTGIRCQ) folds into the EGF-like domain. Cystine bridges form between C45–C58, C53–C69, and C71–C80. A glycan (N-linked (GlcNAc...) asparagine; by host) is linked at N95. Residues 101–121 (IPSPGIMLVLVGIIIIITCCL) form a helical membrane-spanning segment. Residues 122–142 (LSVYRFTRRTNKLPLQDMVVP) are Cytoplasmic-facing.

It belongs to the orthopoxvirus OPG019 family. In terms of assembly, vaccinia growth factor interacts with host EGFR and promotes EGFR dimerization.

The protein resides in the host membrane. It localises to the secreted. Its function is as follows. Stimulates cellular proliferation (hyperplasia)and mobility around infected cells to promote rapid and efficient spread of infection. This effect is beneficial for virus replication in vivo, because poxviruses replicate possibly better in proliferating cells than in quiescent cells. Acts by binding host EGFR, inducing its dimerization, autophosphorylation and leading to activation of several cellular pathways regulating cell proliferation or cell survival. The activation by host EGFR of mitogen activated protein kinases (MAPK) and extracellular-signal regulated kinases (ERK) are essential for the positive effect of vaccinia growth factor on poxvirus virulence in vivo. This chain is Pro-vaccinia growth factor (OPG019), found in Vaccinia virus (strain Copenhagen) (VACV).